The primary structure comprises 305 residues: Putative cuticle collagen 90 (305 aa).

2 disordered regions span residues 95-117 (AGPP…GDLG) and 146-305 (PPGQ…AKRH). Triple-helical region stretches follow at residues 96 to 125 (GPPG…SGIS), 142 to 204 (GPAG…PGTA), 208 to 252 (GAVG…NGRD), and 256 to 270 (GQPG…VGKD). The span at 150–162 (QGPVGPQGFPGVV) shows a compositional bias: low complexity. Residues 278-288 (ARRDSKTESVH) are compositionally biased toward basic and acidic residues.

This sequence belongs to the cuticular collagen family. As to quaternary structure, collagen polypeptide chains are complexed within the cuticle by disulfide bonds and other types of covalent cross-links.

Nematode cuticles are composed largely of collagen-like proteins. The cuticle functions both as an exoskeleton and as a barrier to protect the worm from its environment. This is Putative cuticle collagen 90 (col-90) from Caenorhabditis elegans.